Consider the following 433-residue polypeptide: uncharacterized protein (433 aa).

The signal sequence occupies residues 1-26; sequence MTRRAEFEMGLFVILQSMFLISLCSS. Residues Asn-59, Asn-72, Asn-125, Asn-159, Asn-210, Asn-275, Asn-282, and Asn-323 are each glycosylated (N-linked (GlcNAc...) asparagine). Ala-405 carries GPI-anchor amidated alanine lipidation. A propeptide spans 406-433 (removed in mature form); that stretch reads SSQPRLHDEGVTRLVIFVLSMLLVMLLS.

It is found in the cell membrane. This is an uncharacterized protein from Arabidopsis thaliana (Mouse-ear cress).